Here is a 195-residue protein sequence, read N- to C-terminus: Small ribosomal subunit protein uS10c (195 aa).

Residues 1 to 59 (MATSSISAALLSPLTLRNASSSSTKQDFSTLSSLNLRRTLTPTLQSGHTLSNSSNFATF) constitute a chloroplast transit peptide.

It belongs to the universal ribosomal protein uS10 family. In terms of assembly, component of the chloroplast small ribosomal subunit (SSU). Mature 70S chloroplast ribosomes of higher plants consist of a small (30S) and a large (50S) subunit. The 30S small subunit contains 1 molecule of ribosomal RNA (16S rRNA) and 24 different proteins. The 50S large subunit contains 3 rRNA molecules (23S, 5S and 4.5S rRNA) and 33 different proteins.

It is found in the plastid. The protein resides in the chloroplast. In terms of biological role, component of the chloroplast ribosome (chloro-ribosome), a dedicated translation machinery responsible for the synthesis of chloroplast genome-encoded proteins, including proteins of the transcription and translation machinery and components of the photosynthetic apparatus. The chain is Small ribosomal subunit protein uS10c (RPS10) from Spinacia oleracea (Spinach).